Consider the following 1563-residue polypeptide: Galactose-specific cell agglutination protein gsf2 (1563 aa).

The N-terminal stretch at 1–27 (MSVRRFLSTSARALLFTAALLPSLTSG) is a signal peptide. A run of 29 repeats spans residues 203–280 (TTTT…PTTV), 281–358 (TTTT…PTTV), 359–436 (TTTT…PTTV), 437–514 (TTTT…PTTV), 515–592 (TTTT…PTTV), 593–670 (TTTT…PTTV), 671–750 (TTTT…VSAT), 751–825 (TTTT…GTTT), 826–869 (VVIQ…GTTT), 870–913 (VVIQ…GTTT), 914–957 (VVIQ…GTTT), 958–1001 (VVIQ…GTTT), 1002–1045 (VVIQ…GTTT), 1046–1089 (VVIQ…GTTT), 1090–1133 (VVIQ…GTTT), 1134–1140 (VVINTPT), 1141–1162 (TTGS…ETQL), 1163–1184 (TTAT…ETQV), 1185–1200 (TTGT…ETQA), 1201–1221 (TTAT…TETQ), 1223–1244 (TTAT…ETQV), 1245–1266 (TTAT…ETQV), 1267–1282 (TTGT…ETQA), 1283–1304 (TTAT…ETQA), 1305–1326 (TTAT…ETQV), 1327–1348 (TTAT…ETQV), 1349–1364 (TTGT…ETQA), 1365–1386 (TTAT…ETQV), and 1387–1397 (TTATEVQPTTA). An 8 X 78 AA approximate tandem repeats region spans residues 203–825 (TTTTTVGYPG…IPTGTTGTTT (623 aa)). Residues Asn-224, Asn-263, Asn-302, Asn-341, Asn-380, Asn-419, Asn-458, Asn-497, Asn-536, Asn-575, Asn-614, and Asn-653 are each glycosylated (N-linked (GlcNAc...) asparagine). Asn-784 carries N-linked (GlcNAc...) asparagine glycosylation. The interval 826-1140 (VVIQTPTTVT…TTTVVINTPT (315 aa)) is 8 X 44 AA approximate tandem repeats. A disordered region spans residues 1135–1393 (VINTPTTTGS…TQVTTATEVQ (259 aa)). Positions 1141–1397 (TTGSEVLPTT…TATEVQPTTA (257 aa)) are 13 X 22 AA approximate tandem repeats. Residues Asn-1510, Asn-1516, Asn-1529, and Asn-1532 are each glycosylated (N-linked (GlcNAc...) asparagine). Ser-1539 carries GPI-anchor amidated serine lipidation. Positions 1540 to 1563 (SAGANKPIAYLTFVSLFVYIVTLI) are cleaved as a propeptide — removed in mature form.

Belongs to the mam3/map4 family.

Its subcellular location is the cell membrane. Functionally, galactose-specific adhesion protein essential for non-sexual flocculation and filamentous growth. Required for adhesion and filamentous growth through recognition of galactose residues on cell surface glycoconjugates. Induces flocculation when overexpressed. The polypeptide is Galactose-specific cell agglutination protein gsf2 (Schizosaccharomyces pombe (strain 972 / ATCC 24843) (Fission yeast)).